Consider the following 37-residue polypeptide: Tick defensin 2 (37 aa).

3 disulfides stabilise this stretch: C4/C26, C11/C34, and C15/C36.

This sequence belongs to the invertebrate defensin family.

It localises to the secreted. In terms of biological role, antibacterial peptide mostly active against Gram-positive bacteria (MIC=0.24 ug/ml on Bacillus subtilis, and MIC=0.94 ug/ml on Micrococcus luteus, MIC&gt;120 ug/ml on both Escherichia coli and Pseudomonas aeruginosa). The polypeptide is Tick defensin 2 (Ornithodoros savignyi (African eyed tampan)).